Consider the following 673-residue polypeptide: UvrABC system protein B (673 aa).

Residues 26–414 (ANFEAGLAKQ…AGEITELVVR (389 aa)) form the Helicase ATP-binding domain. Position 39–46 (39–46 (GVTGSGKT)) interacts with ATP. A Beta-hairpin motif is present at residues 92-115 (YYDYYQPEAYVPSSDTFIEKDSSI). Residues 431–597 (QVDDLMSEVH…SVARPISDIM (167 aa)) enclose the Helicase C-terminal domain. The segment at 601-626 (REDAAEKKAGKGRSKSRQVAEEPADY) is disordered. The region spanning 635–670 (AGKLKALEQKMYQHAKDLEFEAAAQIRDQILKLKAA) is the UVR domain.

The protein belongs to the UvrB family. In terms of assembly, forms a heterotetramer with UvrA during the search for lesions. Interacts with UvrC in an incision complex.

It is found in the cytoplasm. Functionally, the UvrABC repair system catalyzes the recognition and processing of DNA lesions. A damage recognition complex composed of 2 UvrA and 2 UvrB subunits scans DNA for abnormalities. Upon binding of the UvrA(2)B(2) complex to a putative damaged site, the DNA wraps around one UvrB monomer. DNA wrap is dependent on ATP binding by UvrB and probably causes local melting of the DNA helix, facilitating insertion of UvrB beta-hairpin between the DNA strands. Then UvrB probes one DNA strand for the presence of a lesion. If a lesion is found the UvrA subunits dissociate and the UvrB-DNA preincision complex is formed. This complex is subsequently bound by UvrC and the second UvrB is released. If no lesion is found, the DNA wraps around the other UvrB subunit that will check the other stand for damage. The polypeptide is UvrABC system protein B (Xanthomonas campestris pv. campestris (strain 8004)).